A 220-amino-acid polypeptide reads, in one-letter code: 7-cyano-7-deazaguanine synthase (220 aa).

10 to 20 is a binding site for ATP; that stretch reads FSGGQDSTTCL. Positions 186, 195, 198, and 201 each coordinate Zn(2+).

Belongs to the QueC family. In terms of assembly, homodimer. It depends on Zn(2+) as a cofactor.

The enzyme catalyses 7-carboxy-7-deazaguanine + NH4(+) + ATP = 7-cyano-7-deazaguanine + ADP + phosphate + H2O + H(+). It participates in purine metabolism; 7-cyano-7-deazaguanine biosynthesis. Catalyzes the ATP-dependent conversion of 7-carboxy-7-deazaguanine (CDG) to 7-cyano-7-deazaguanine (preQ(0)). The protein is 7-cyano-7-deazaguanine synthase of Bacillus cereus (strain B4264).